Here is a 229-residue protein sequence, read N- to C-terminus: Large ribosomal subunit protein uL1 (229 aa).

The protein belongs to the universal ribosomal protein uL1 family. In terms of assembly, part of the 50S ribosomal subunit.

Its function is as follows. Binds directly to 23S rRNA. The L1 stalk is quite mobile in the ribosome, and is involved in E site tRNA release. Functionally, protein L1 is also a translational repressor protein, it controls the translation of the L11 operon by binding to its mRNA. The protein is Large ribosomal subunit protein uL1 of Magnetococcus marinus (strain ATCC BAA-1437 / JCM 17883 / MC-1).